We begin with the raw amino-acid sequence, 364 residues long: Peptide chain release factor 2 (364 aa).

Glutamine 251 bears the N5-methylglutamine mark.

The protein belongs to the prokaryotic/mitochondrial release factor family. Post-translationally, methylated by PrmC. Methylation increases the termination efficiency of RF2.

It localises to the cytoplasm. In terms of biological role, peptide chain release factor 2 directs the termination of translation in response to the peptide chain termination codons UGA and UAA. This is Peptide chain release factor 2 (prfB) from Buchnera aphidicola subsp. Schizaphis graminum (strain Sg).